Reading from the N-terminus, the 1024-residue chain is Beta-galactosidase (1024 aa).

Positions 103 and 202 each coordinate substrate. Aspartate 202 is a binding site for Na(+). Residues glutamate 417, histidine 419, and glutamate 462 each coordinate Mg(2+). Residues glutamate 462 and 538–541 (EYAH) contribute to the substrate site. Glutamate 462 functions as the Proton donor in the catalytic mechanism. Residue glutamate 538 is the Nucleophile of the active site. A Mg(2+)-binding site is contributed by asparagine 598. Positions 602 and 605 each coordinate Na(+). Asparagine 605 and tryptophan 1000 together coordinate substrate.

Belongs to the glycosyl hydrolase 2 family. As to quaternary structure, homotetramer. Mg(2+) is required as a cofactor. It depends on Mn(2+) as a cofactor. The cofactor is Na(+).

The enzyme catalyses Hydrolysis of terminal non-reducing beta-D-galactose residues in beta-D-galactosides.. Its activity is regulated as follows. Inhibited by phenylethyl thio-beta-D-galactoside (PETG), isopropyl thio-beta-D-galactoside (IPTG), L-ribose, D-galactonolactone, lactose and 2-amino-D-galactose. The polypeptide is Beta-galactosidase (lacZ) (Escherichia coli (strain K12)).